A 229-amino-acid polypeptide reads, in one-letter code: Peroxiredoxin-like 2A (229 aa).

The segment at 14–112 (MWSIGVGAFG…DELGVPLYAV (99 aa)) is thioredoxin fold. Catalysis depends on redox-active residues C85 and C88.

This sequence belongs to the peroxiredoxin-like PRXL2 family. PRXL2A subfamily. As to expression, expressed by the principal cells of the epididymis. Detected in the head region of epididymal sperm (at protein level). Expressed in bone marrow.

Its subcellular location is the cytoplasm. It localises to the secreted. Its function is as follows. Involved in redox regulation of the cell. Acts as an antioxidant. Inhibits TNFSF11-induced NFKB1 and JUN activation and osteoclast differentiation. May affect bone resorption and help to maintain bone mass. Acts as a negative regulator of macrophage-mediated inflammation by inhibiting macrophage production of inflammatory cytokines, probably through suppression of the MAPK signaling pathway. This chain is Peroxiredoxin-like 2A, found in Rattus norvegicus (Rat).